Reading from the N-terminus, the 265-residue chain is MTTAHRPQFDPARGHSEMAPTRITSSRALPAHLKLKYRQESQGTEEEVRKQDLREALLRAEAAHFATQEHGASSEEVSQNSKLIEGFTSPSTDDKPNNDVEVDYQELLRQTLEADEDASDSDDSVDSSNKNSEVSIKRRKTESNSQESVDSSNSESSDEESDSEDETQQLLRELENIKQERKREQMLQEEKNRALEQEKREREIAFGNELLNKASSGSFQVKRRWDEDVVFRNTHKGVDDTPRPGFVNDMLRSEFHKKFLARFVD.

Disordered regions lie at residues 1–31 and 62–197; these read MTTAHRPQFDPARGHSEMAPTRITSSRALPA and AAHF…ALEQ. A compositionally biased stretch (acidic residues) spans 113-125; that stretch reads EADEDASDSDDSV. Residues 143–155 are compositionally biased toward low complexity; that stretch reads SNSQESVDSSNSE. The stretch at 155–205 forms a coiled coil; the sequence is ESSDEESDSEDETQQLLRELENIKQERKREQMLQEEKNRALEQEKREREIA. Acidic residues predominate over residues 156-167; it reads SSDEESDSEDET. Basic and acidic residues predominate over residues 172–197; sequence RELENIKQERKREQMLQEEKNRALEQ.

The protein belongs to the CWC15 family. As to quaternary structure, belongs to the 40S cdc5-associated complex (or cwf complex), a spliceosome sub-complex reminiscent of a late-stage spliceosome composed of the U2, U5 and U6 snRNAs and at least brr2, cdc5, cwf2/prp3, cwf3/syf1, cwf4/syf3, cwf5/ecm2, spp42/cwf6, cwf7/spf27, cwf8, cwf9, cwf10, cwf11, cwf12, prp45/cwf13, cwf14, cwf15, cwf16, cwf17, cwf18, cwf19, cwf20, cwf21, cwf22, cwf23, cwf24, cwf25, cwf26, cyp7/cwf27, cwf28, cwf29/ist3, lea1, msl1, prp5/cwf1, prp10, prp12/sap130, prp17, prp22, sap61, sap62, sap114, sap145, slu7, smb1, smd1, smd3, smf1, smg1 and syf2.

The protein resides in the nucleus. Its function is as follows. Involved in pre-mRNA splicing. In Schizosaccharomyces pombe (strain 972 / ATCC 24843) (Fission yeast), this protein is Pre-mRNA-splicing factor cwf15 (cwf15).